The following is an 872-amino-acid chain: Probable cation-transporting P-type ATPase (872 aa).

Topologically, residues 1 to 41 are cytoplasmic; that stretch reads MNKWTGLSAAAVLESRAQHGANLIPTKKLTPFWLLFLEQFK. The helical transmembrane segment at 42-62 threads the bilayer; the sequence is SLVVILLLVATILSLVVAIIS. Residues 63-79 are Extracellular-facing; the sequence is GVNANWLFDHNLVIEWT. Residues 80 to 100 traverse the membrane as a helical segment; the sequence is QPFVILITVLANSLIGSIQEF. Topologically, residues 101 to 237 are cytoplasmic; it reads KAQKSAHTLK…TKLSPLQQKL (137 aa). The helical transmembrane segment at 238 to 257 threads the bilayer; it reads EKVGKWFSWFGLGLFVVVFL. The Extracellular portion of the chain corresponds to 258-275; it reads VQLGLLGFHNFSANWSIA. A helical transmembrane segment spans residues 276-293; it reads LIGAIALVVAIIPEGLVT. The Cytoplasmic segment spans residues 294–642; it reads FINVIFALSV…EQGRKTFLTC (349 aa). D331 (4-aspartylphosphate intermediate) is an active-site residue. D587 and D591 together coordinate Mg(2+). A helical membrane pass occupies residues 643–662; that stretch reads KRVLFNLFLTSIAGTIVVLL. At 663–685 the chain is on the extracellular side; it reads GLFVLGEVFREQLSKANHNFQVF. A helical membrane pass occupies residues 686–706; the sequence is TPTQLLIINLFVHGFPAVALA. Residues 707–724 are Cytoplasmic-facing; the sequence is IQPVQEKLMLKPFSTKNL. The helical transmembrane segment at 725 to 747 threads the bilayer; it reads FYNRGGFDLIWQSLLLSFLTLLF. At 748–768 the chain is on the extracellular side; sequence YSLGMVYAINDPELGKSGDLI. The chain crosses the membrane as a helical span at residues 769-788; it reads NRAGATCGFMVLGGSAALNS. Residues 789–801 lie on the Cytoplasmic side of the membrane; the sequence is LNLMVDRPLVATN. The chain crosses the membrane as a helical span at residues 802–824; the sequence is PKHYGIVWLGALSSIFVFLLIIF. The Extracellular portion of the chain corresponds to 825-842; sequence INPLGLVFSTLKDLTAHP. A helical transmembrane segment spans residues 843–863; the sequence is VLIGYSFGGVLLYMTINEVVK. The Cytoplasmic segment spans residues 864–872; the sequence is LIRLSYGSV.

The protein belongs to the cation transport ATPase (P-type) (TC 3.A.3) family. Type II subfamily.

It is found in the cell membrane. The catalysed reaction is ATP + H2O = ADP + phosphate + H(+). Functionally, could mediate calcium influx. In Mycoplasma pneumoniae (strain ATCC 29342 / M129 / Subtype 1) (Mycoplasmoides pneumoniae), this protein is Probable cation-transporting P-type ATPase (pacL).